A 312-amino-acid chain; its full sequence is Putative endo-1,4-beta-xylanase (312 aa).

The region spanning 1-301 (MKQQYLLDYE…KPCFYSFLQA (301 aa)) is the GH10 domain. Residue Glu104 is the Proton donor of the active site. Residue Glu216 is the Nucleophile of the active site.

Belongs to the glycosyl hydrolase 10 (cellulase F) family.

It catalyses the reaction Endohydrolysis of (1-&gt;4)-beta-D-xylosidic linkages in xylans.. It functions in the pathway glycan degradation; xylan degradation. In terms of biological role, could be a xylanase. This is Putative endo-1,4-beta-xylanase from Caldicellulosiruptor saccharolyticus (Caldocellum saccharolyticum).